Reading from the N-terminus, the 446-residue chain is Maltoporin (446 aa).

The signal sequence occupies residues 1–25; sequence MMITLRKLPLAVAVAAGVMSAQAMA.

It belongs to the porin LamB (TC 1.B.3) family. In terms of assembly, homotrimer formed of three 18-stranded antiparallel beta-barrels, containing three independent channels.

It is found in the cell outer membrane. It catalyses the reaction beta-maltose(in) = beta-maltose(out). Functionally, involved in the transport of maltose and maltodextrins. The sequence is that of Maltoporin from Escherichia coli O8 (strain IAI1).